The chain runs to 613 residues: DNA mismatch repair protein MutL (613 aa).

Belongs to the DNA mismatch repair MutL/HexB family.

In terms of biological role, this protein is involved in the repair of mismatches in DNA. It is required for dam-dependent methyl-directed DNA mismatch repair. May act as a 'molecular matchmaker', a protein that promotes the formation of a stable complex between two or more DNA-binding proteins in an ATP-dependent manner without itself being part of a final effector complex. This chain is DNA mismatch repair protein MutL, found in Bradyrhizobium sp. (strain ORS 278).